A 189-amino-acid chain; its full sequence is Chitin synthase 2 (189 aa).

It belongs to the chitin synthase family. Class II subfamily.

It is found in the cell membrane. It catalyses the reaction [(1-&gt;4)-N-acetyl-beta-D-glucosaminyl](n) + UDP-N-acetyl-alpha-D-glucosamine = [(1-&gt;4)-N-acetyl-beta-D-glucosaminyl](n+1) + UDP + H(+). Functionally, polymerizes chitin, a structural polymer of the cell wall and septum, by transferring the sugar moiety of UDP-GlcNAc to the non-reducing end of the growing chitin polymer. The protein is Chitin synthase 2 (chs2) of Aspergillus niger.